We begin with the raw amino-acid sequence, 264 residues long: Indole-3-glycerol phosphate synthase (264 aa).

It belongs to the TrpC family.

The enzyme catalyses 1-(2-carboxyphenylamino)-1-deoxy-D-ribulose 5-phosphate + H(+) = (1S,2R)-1-C-(indol-3-yl)glycerol 3-phosphate + CO2 + H2O. It participates in amino-acid biosynthesis; L-tryptophan biosynthesis; L-tryptophan from chorismate: step 4/5. The chain is Indole-3-glycerol phosphate synthase from Albidiferax ferrireducens (strain ATCC BAA-621 / DSM 15236 / T118) (Rhodoferax ferrireducens).